Consider the following 325-residue polypeptide: 8-oxo-dGDP phosphatase NUDT18 (325 aa).

The Nudix hydrolase domain maps to 38-163 (NVCYIVGAVI…DILSLIDAGL (126 aa)). Residue Leu-55 coordinates Mg(2+). The Nudix box signature appears at 73-94 (GRMEECESILEALQREVREEAG).

Belongs to the Nudix hydrolase family. Mn(2+) is required as a cofactor. Mg(2+) serves as cofactor.

The enzyme catalyses 8-oxo-dGDP + H2O = 8-oxo-dGMP + phosphate + H(+). The catalysed reaction is 8-oxo-dADP + H2O = 8-oxo-dAMP + phosphate + H(+). It carries out the reaction 2-oxo-dADP + H2O = 2-oxo-dAMP + phosphate + H(+). It catalyses the reaction 8-oxo-GDP + H2O = 8-oxo-GMP + phosphate + H(+). Its function is as follows. Mediates the hydrolysis of oxidized nucleoside diphosphate derivatives. Hydrolyzes 8-oxo-7,8-dihydroguanine (8-oxo-Gua)-containing deoxyribo- and ribonucleoside diphosphates to the monophosphates. Hydrolyzes 8-oxo-dGDP and 8-oxo-GDP with the same efficiencies. Also hydrolyzes 8-OH-dADP and 2-OH-dADP. Exhibited no or minimal hydrolysis activity against 8-oxo-dGTP, 8-oxo-GTP, dGTP, GTP, dGDP and GDP. Probably removes oxidized guanine nucleotides from both the DNA and RNA precursor pools. The chain is 8-oxo-dGDP phosphatase NUDT18 (nudt18) from Danio rerio (Zebrafish).